The sequence spans 86 residues: Curamycin polyketide synthase acyl carrier protein (86 aa).

The region spanning Gln-7 to Ala-86 is the Carrier domain. Ser-44 carries the post-translational modification O-(pantetheine 4'-phosphoryl)serine.

In terms of processing, 4'-phosphopantetheine is transferred from CoA to a specific serine of the apo-ACP-like protein.

Its pathway is antibiotic biosynthesis; curamycin biosynthesis. Acyl carrier protein. This chain is Curamycin polyketide synthase acyl carrier protein (curE), found in Streptomyces cyaneus (Streptomyces curacoi).